A 442-amino-acid polypeptide reads, in one-letter code: 4-alpha-glucanotransferase (442 aa).

Ca(2+) contacts are provided by Asp13, Asn15, Asp17, Val19, and Asp21. Asp186 serves as the catalytic Nucleophile. The Proton donor role is filled by Glu216.

Belongs to the glycosyl hydrolase 13 family. In terms of assembly, monomer. It depends on Ca(2+) as a cofactor.

It is found in the cytoplasm. It carries out the reaction Transfers a segment of a (1-&gt;4)-alpha-D-glucan to a new position in an acceptor, which may be glucose or a (1-&gt;4)-alpha-D-glucan.. Hydrolyzes the 1,4-alpha-glycoside bonds in oligomeric and polymeric 1,4-alpha-glucans and transfers oligosaccharides (maltotriose being the shortest one) to acceptor maltodextrins. The protein is 4-alpha-glucanotransferase (mgtA) of Thermotoga neapolitana.